A 597-amino-acid chain; its full sequence is Elongation factor 4 (597 aa).

One can recognise a tr-type G domain in the interval 2–184 (KHIRNFSIIA…TIVKCIPAPE (183 aa)). Residues 14 to 19 (DHGKST) and 131 to 134 (NKID) contribute to the GTP site.

This sequence belongs to the TRAFAC class translation factor GTPase superfamily. Classic translation factor GTPase family. LepA subfamily.

The protein resides in the cell inner membrane. The catalysed reaction is GTP + H2O = GDP + phosphate + H(+). In terms of biological role, required for accurate and efficient protein synthesis under certain stress conditions. May act as a fidelity factor of the translation reaction, by catalyzing a one-codon backward translocation of tRNAs on improperly translocated ribosomes. Back-translocation proceeds from a post-translocation (POST) complex to a pre-translocation (PRE) complex, thus giving elongation factor G a second chance to translocate the tRNAs correctly. Binds to ribosomes in a GTP-dependent manner. This is Elongation factor 4 from Aliivibrio salmonicida (strain LFI1238) (Vibrio salmonicida (strain LFI1238)).